A 734-amino-acid polypeptide reads, in one-letter code: Methionine--tRNA ligase (734 aa).

The 'HIGH' region signature appears at 12–22; the sequence is PYVNNIPHLGN. Residues Cys143, Cys146, Cys155, and Cys158 each contribute to the Zn(2+) site. Positions 330 to 334 match the 'KMSKS' region motif; sequence KFSKS. ATP is bound at residue Lys333. In terms of domain architecture, tRNA-binding spans 570–675; sequence FREKVLLRVV…QNPIAGERII (106 aa).

It belongs to the class-I aminoacyl-tRNA synthetase family. MetG type 1 subfamily. Homodimer. The cofactor is Zn(2+).

The protein resides in the cytoplasm. It carries out the reaction tRNA(Met) + L-methionine + ATP = L-methionyl-tRNA(Met) + AMP + diphosphate. Functionally, is required not only for elongation of protein synthesis but also for the initiation of all mRNA translation through initiator tRNA(fMet) aminoacylation. The chain is Methionine--tRNA ligase from Borreliella burgdorferi (strain ZS7) (Borrelia burgdorferi).